Here is a 408-residue protein sequence, read N- to C-terminus: uncharacterized protein (408 aa).

8 consecutive 4Fe-4S ferredoxin-type domains span residues 42 to 72, 78 to 107, 122 to 151, 151 to 181, 212 to 241, 233 to 265, 273 to 302, and 304 to 333; these read IPPI…MIYN, KLPV…MDKH, SNLI…RKEG, GKYV…VVDE, KIPH…NEKK, GEID…IYKP, ICYV…ISKE, and KLPY…VVKP. Residues Cys-52, Cys-55, Cys-58, Cys-62, Cys-87, Cys-90, Cys-93, Cys-97, Cys-131, Cys-134, Cys-137, Cys-141, Cys-160, Cys-163, Cys-166, and Cys-170 each coordinate [4Fe-4S] cluster. [4Fe-4S] cluster contacts are provided by Cys-282, Cys-285, Cys-288, and Cys-292.

This is an uncharacterized protein from Methanocaldococcus jannaschii (strain ATCC 43067 / DSM 2661 / JAL-1 / JCM 10045 / NBRC 100440) (Methanococcus jannaschii).